The following is a 922-amino-acid chain: Histidine kinase 5 (922 aa).

Coiled coils occupy residues 86-120 and 169-205; these read MQDNAVRLLKEELKNLDRQREEAEAKELKIIEEYK and KQKALSLEKMLEASTERERRLMEKLSESLKTMESQSA. The Histidine kinase domain maps to 373–614; the sequence is TMSHEIRSPL…TFTFILPYKV (242 aa). H376 is subject to Phosphohistidine; by autocatalysis. 2 disordered regions span residues 620–639 and 728–773; these read YSDDQDEFSDMADQQSEPDD and NGRC…TEVK. Positions 738–747 are enriched in low complexity; it reads SCSSSQASSE. The segment covering 761–773 has biased composition (basic and acidic residues); that stretch reads SHREEEKAETEVK. The Response regulatory domain maps to 779–921; the sequence is KILLVEDNKI…KLRECLQQYL (143 aa). Residues D785, D828, and C830 each coordinate Mg(2+). D828 is subject to 4-aspartylphosphate.

Interacts with AHP1, APH2, APH3, APH5 and APH6, but not with APH4. Present in light-grown but not in etiolated seedlings. Mostly expressed in roots flowers and siliques, and, to a lower extent, in stems and leaves, especially in guard cells.

The protein localises to the cell membrane. The protein resides in the cytoplasm. The enzyme catalyses ATP + protein L-histidine = ADP + protein N-phospho-L-histidine.. Functionally, functions as a histidine kinase and transmits the stress signal to a downstream MAPK cascade. This protein undergoes an ATP-dependent autophosphorylation at a conserved histidine residue in the kinase core, and a phosphoryl group is then transferred to a conserved aspartate residue in the receiver domain. Negative regulator of the ETR1-dependent abscisic acid (ABA) and ethylene signaling pathway that inhibits the root elongation. Promotes stomatal closure. Regulates stomatal opening by integrating multiple signals via hydrogen peroxide H(2)O(2) homeostasis in guard cells in an ABA-independent manner. May contribute to basal defense mechanisms by closing stomata in the presence of bacterial pathogens. Regulates both hormone levels and ROS production in response to stress. Required for full immunity to bacterial pathogen and necrotrophic fungus. This chain is Histidine kinase 5 (AHK5), found in Arabidopsis thaliana (Mouse-ear cress).